A 309-amino-acid polypeptide reads, in one-letter code: Sodium/potassium-transporting ATPase subunit beta-1 (309 aa).

Topologically, residues 1-45 (MSKNNGKGAKGEFEFPQPAKKQTFSEMIYNPQEGTFFGRTGKSWS) are cytoplasmic. The chain crosses the membrane as a helical; Signal-anchor for type II membrane protein span at residues 46–66 (QLLLFYTIFYIVLAALFTICM). The Extracellular portion of the chain corresponds to 67–309 (QGLLSTISDT…GSVTFQILLD (243 aa)). The N-linked (GlcNAc...) asparagine glycan is linked to Asn-133. Intrachain disulfides connect Cys-143-Cys-155 and Cys-165-Cys-179. Residue Asn-211 is glycosylated (N-linked (GlcNAc...) asparagine). A disulfide bridge connects residues Cys-225 and Cys-282.

It belongs to the X(+)/potassium ATPases subunit beta family. In terms of assembly, the sodium/potassium-transporting ATPase is composed of a catalytic alpha subunit, an auxiliary non-catalytic beta subunit and an additional regulatory subunit. Interacts with nkain. In terms of tissue distribution, in embryos, it is expressed in the neurons of the CNS and PNS, in Garland cells and posterior spiracles. In adults, it is concentrated in the thorax and abdomen (muscle tissue, digestive system and Malpighian tubules) and weakly expressed in the head. Expression is diffuse in the nervous system.

It is found in the cell membrane. This is the non-catalytic component of the active enzyme, which catalyzes the hydrolysis of ATP coupled with the exchange of Na(+) and K(+) ions across the plasma membrane. The beta subunit regulates, through assembly of alpha/beta heterodimers, the number of sodium pumps transported to the plasma membrane. The polypeptide is Sodium/potassium-transporting ATPase subunit beta-1 (nrv1) (Drosophila melanogaster (Fruit fly)).